A 153-amino-acid chain; its full sequence is Ribosome maturation factor RimP (153 aa).

The protein belongs to the RimP family.

It localises to the cytoplasm. Its function is as follows. Required for maturation of 30S ribosomal subunits. The sequence is that of Ribosome maturation factor RimP from Psychromonas ingrahamii (strain DSM 17664 / CCUG 51855 / 37).